Here is a 185-residue protein sequence, read N- to C-terminus: Elongation factor P (185 aa).

The protein belongs to the elongation factor P family.

The protein resides in the cytoplasm. It functions in the pathway protein biosynthesis; polypeptide chain elongation. Functionally, involved in peptide bond synthesis. Stimulates efficient translation and peptide-bond synthesis on native or reconstituted 70S ribosomes in vitro. Probably functions indirectly by altering the affinity of the ribosome for aminoacyl-tRNA, thus increasing their reactivity as acceptors for peptidyl transferase. The sequence is that of Elongation factor P from Limosilactobacillus reuteri (strain DSM 20016) (Lactobacillus reuteri).